The primary structure comprises 1634 residues: Leucine-rich repeat-containing protein 37A3 (1634 aa).

A signal peptide spans 1–35 (MTSAQCPALACVMSPLRFWGPWPLLMWQLLWLLVK). Topologically, residues 36-1581 (EAQPLEWVKD…ELPGYGYTKK (1546 aa)) are extracellular. 5 disordered regions span residues 53 to 104 (PLGP…ESTE), 129 to 154 (SQQDLKDKLSPQERLPVSPKKLKKDP), 172 to 531 (TPQS…VVVA), 619 to 642 (PEPTTEVGHSTPPKRTIVSPKHPE), and 758 to 777 (EPTTETGHSTALEKTTAPRP). The stretch at 137-160 (LSPQERLPVSPKKLKKDPAQRWSL) is one LRR 1 repeat. 2 stretches are compositionally biased toward polar residues: residues 172 to 189 (TPQSQKQTLQNEYSSTDT) and 223 to 237 (ETQNPETLEDIQSSS). 2 LRR repeats span residues 230–253 (LEDIQSSSLQQEAPAQLPQLLEEE) and 267–290 (ESSMESLTLPNHEVSVQPPGEDQA). Over residues 238-249 (LQQEAPAQLPQL) the composition is skewed to low complexity. N296 carries an N-linked (GlcNAc...) asparagine glycan. Residues 307-326 (TITSEPTNETESSQAQQETP) are compositionally biased toward polar residues. A compositionally biased stretch (low complexity) spans 358 to 368 (SEQQQPVQPSE). Over residues 433–446 (LVHQEATTRLSGSG) the composition is skewed to polar residues. The span at 482 to 493 (SPEPINNENPSP) shows a compositional bias: low complexity. Residues 760–770 (TTETGHSTALE) are compositionally biased toward polar residues. LRR repeat units follow at residues 864–887 (NGTFTILNFQGNYISYIDGNVWKA), 888–911 (YSWTEKLILRENNLTELHKDSFEG), 912–935 (LLSLQYLDLSCNKIQSIERHTFEP), 937–959 (PFLKFINLSCNVITELSFGTFQA), 963–987 (MQFLHKLILNHNPLTTVEDPYLFKL), and 1002–1027 (LTTLKNILMMTVELEKLIVPSHMACC). N1079 carries N-linked (GlcNAc...) asparagine glycosylation. LRR repeat units lie at residues 1124 to 1146 (LPYFSAVNLDVKSLLLPFIKLPT) and 1151 to 1176 (LAKIQTVGKNRQRLNRVLMGPRSIQK). Basic and acidic residues-rich tracts occupy residues 1181-1191 (EVGRQSIRREQ) and 1201-1216 (AEEKRLGSPAPRELKQ). 2 disordered regions span residues 1181 to 1227 (EVGR…EKLA) and 1306 to 1329 (RFHKTRSRMTHRTPKVKKSPKVRK). One copy of the LRR 12 repeat lies at 1359–1384 (FSSLRDLSPQENPFLEVSAPSEHFIE). The helical transmembrane segment at 1582-1602 (LILALIVTGILTILIILLCLI) threads the bilayer. Over 1603-1634 (EICCHRRSLQEDEEGFSRDSEAPTEEESEALP) the chain is Cytoplasmic. Positions 1614–1634 (DEEGFSRDSEAPTEEESEALP) are disordered. Positions 1624-1634 (APTEEESEALP) are enriched in acidic residues.

It belongs to the LRRC37A family.

It localises to the membrane. The sequence is that of Leucine-rich repeat-containing protein 37A3 (LRRC37A3) from Homo sapiens (Human).